The primary structure comprises 72 residues: NAD(P)H-quinone oxidoreductase subunit O (72 aa).

It belongs to the complex I NdhO subunit family. NDH-1 can be composed of about 15 different subunits; different subcomplexes with different compositions have been identified which probably have different functions.

It is found in the cellular thylakoid membrane. It catalyses the reaction a plastoquinone + NADH + (n+1) H(+)(in) = a plastoquinol + NAD(+) + n H(+)(out). The enzyme catalyses a plastoquinone + NADPH + (n+1) H(+)(in) = a plastoquinol + NADP(+) + n H(+)(out). Functionally, NDH-1 shuttles electrons from an unknown electron donor, via FMN and iron-sulfur (Fe-S) centers, to quinones in the respiratory and/or the photosynthetic chain. The immediate electron acceptor for the enzyme in this species is believed to be plastoquinone. Couples the redox reaction to proton translocation, and thus conserves the redox energy in a proton gradient. Cyanobacterial NDH-1 also plays a role in inorganic carbon-concentration. This is NAD(P)H-quinone oxidoreductase subunit O from Gloeothece citriformis (strain PCC 7424) (Cyanothece sp. (strain PCC 7424)).